We begin with the raw amino-acid sequence, 342 residues long: MSKIDVAIIGASGYTGGELVRLLTRHPRVNISTVTSRKNNGEDLSSLHPNLQDLDLKFTNPDTKDIDADVVFSALPHGVSMKLVPEYLDNGARVIDLSGDFRFSDVSVYEKWYGMKHEHPDLKAVFGLPEINRDKIKDATLIANPGCFPTGAILSSLPIVENKLVDRIILDSKSGVSGAGISPNNNTHYPTCADNIKPYAIANHRHTPEIREQLRNFGTGTVKVSFTPHLVPVIRGIITTNHSFLLKNDVSASDVHDLYMDYYKNEPFVKVLKDNNIPLLASVRGSNYCQIGGISLDDEDELVVVSAIDNLVKGASGQAIQNMNIMFGFDETEGLKELGLYP.

Cys-147 is a catalytic residue.

The protein belongs to the NAGSA dehydrogenase family. Type 1 subfamily.

Its subcellular location is the cytoplasm. The catalysed reaction is N-acetyl-L-glutamate 5-semialdehyde + phosphate + NADP(+) = N-acetyl-L-glutamyl 5-phosphate + NADPH + H(+). It functions in the pathway amino-acid biosynthesis; L-arginine biosynthesis; N(2)-acetyl-L-ornithine from L-glutamate: step 3/4. Catalyzes the NADPH-dependent reduction of N-acetyl-5-glutamyl phosphate to yield N-acetyl-L-glutamate 5-semialdehyde. This is N-acetyl-gamma-glutamyl-phosphate reductase from Methanosphaera stadtmanae (strain ATCC 43021 / DSM 3091 / JCM 11832 / MCB-3).